A 159-amino-acid polypeptide reads, in one-letter code: UPF0201 protein MK0399 (159 aa).

This sequence belongs to the UPF0201 family.

In Methanopyrus kandleri (strain AV19 / DSM 6324 / JCM 9639 / NBRC 100938), this protein is UPF0201 protein MK0399.